The chain runs to 103 residues: Integration host factor subunit alpha (103 aa).

Positions 51-73 are disordered; it reads FGNFQLRDKPQRPGRNPKTGEEI.

Belongs to the bacterial histone-like protein family. In terms of assembly, heterodimer of an alpha and a beta chain.

This protein is one of the two subunits of integration host factor, a specific DNA-binding protein that functions in genetic recombination as well as in transcriptional and translational control. In Azoarcus sp. (strain BH72), this protein is Integration host factor subunit alpha.